The following is a 477-amino-acid chain: Monocarboxylate transporter 12-B (477 aa).

Over Met-1 to Gly-9 the chain is Cytoplasmic. 12 helical membrane-spanning segments follow: residues Val-10–Val-30, Ala-58–Ile-78, Ile-86–Thr-106, Gly-116–Ile-136, Ile-148–Ile-168, Leu-178–Ile-198, Phe-253–Tyr-273, Ala-289–Leu-309, Asn-320–Leu-340, Val-344–Ile-364, Val-383–Val-403, and Phe-413–Ile-433. Residues Arg-434–Ser-477 lie on the Cytoplasmic side of the membrane.

It belongs to the major facilitator superfamily. Monocarboxylate porter (TC 2.A.1.13) family.

It is found in the cell membrane. Its subcellular location is the basolateral cell membrane. The catalysed reaction is creatine(in) = creatine(out). It carries out the reaction guanidinoacetate(in) = guanidinoacetate(out). Functionally, functions as a transporter for creatine and as well for its precursor guanidinoacetate. Transport of creatine and GAA is independent of resting membrane potential and extracellular Na(+), Cl(-), or pH. Contributes to the process of creatine biosynthesis and distribution. This is Monocarboxylate transporter 12-B (slc16a12b) from Danio rerio (Zebrafish).